A 586-amino-acid chain; its full sequence is MNVYAIFADHVREAVAALVAEGIIAKDLDLARVVVEPPRDASHGDLATNAAMVLAKDAGLKPRELAERIAGKLGTVAGVKKVDVAGPGFINIALDGTFWPVVLAAVLTQGLDFGRSALGAGEKVNVEYVSANPTGPMHVGHCRGAVFGDALARLMDFAGFAVTKEYYINDAGAQVDVLARSAFLRYREALGEAIGEIPEGLYPGDYLVPVGQKLAAAHGPALKEKSETDWLPLVRAEAIATMMVAIREDLAALGISFDVFFSERSLSTGAVDRVGAAIEALRASGEVYEGRLPPPKGAPIEDWEDREQTLFRSTDFGDDVDRPLKKSDGSYTYFAGDIAYHKDKVDRGFLKMIDVWGADHGGYVKRMQAAVKAVSGGRATLDVELIQLVRLFRAGEPVRMSKRSGSFVTLREVVDEVGRDAVRFMMLFRKNDAPLDFDLAKVIEQSRENPVFYVQYAHARAKSILRNAAEEFADLPQQAASFATAPLARLDDEGEITLLRRLASWPRLVEQAAGAREPHRISFFLHELASEFHGQWNRGKDLPHLRFIIENDRELTSARLALVHGVATVLASGLKVLGVTAVDEMK.

A 'HIGH' region motif is present at residues 131–141 (ANPTGPMHVGH).

The protein belongs to the class-I aminoacyl-tRNA synthetase family. As to quaternary structure, monomer.

It localises to the cytoplasm. It carries out the reaction tRNA(Arg) + L-arginine + ATP = L-arginyl-tRNA(Arg) + AMP + diphosphate. This chain is Arginine--tRNA ligase, found in Xanthobacter autotrophicus (strain ATCC BAA-1158 / Py2).